A 222-amino-acid chain; its full sequence is Peptidyl-prolyl cis-trans isomerase FKBP7 (222 aa).

The first 23 residues, 1–23 (MPKTMHFLFRFIVFFYLWGLFTA), serve as a signal peptide directing secretion. Asn45 carries N-linked (GlcNAc...) asparagine glycosylation. The PPIase FKBP-type domain occupies 53–145 (GDLLNAHYDG…IFEIELYAVT (93 aa)). EF-hand domains follow at residues 145–180 (TKGP…EFEK) and 189–222 (YQDA…HDEL). 9 residues coordinate Ca(2+): Asp158, Asp160, Asp162, Gln164, Glu169, Asp202, Asp204, Asp206, and Glu213. The interval 200–222 (KNDHDGDGFISPKEYNVYQHDEL) is disordered. Positions 219–222 (HDEL) match the Retention in the endoplasmic reticulum motif.

In terms of processing, glycosylated.

Its subcellular location is the endoplasmic reticulum lumen. It catalyses the reaction [protein]-peptidylproline (omega=180) = [protein]-peptidylproline (omega=0). Functionally, PPIases accelerate the folding of proteins during protein synthesis. This chain is Peptidyl-prolyl cis-trans isomerase FKBP7 (FKBP7), found in Homo sapiens (Human).